Reading from the N-terminus, the 384-residue chain is Substance-K receptor (384 aa).

Residues 1 to 32 are Extracellular-facing; the sequence is MGAHASVTDTNILSGLESNATGVTAFSMPGWQ. N19 carries N-linked (GlcNAc...) asparagine glycosylation. A helical transmembrane segment spans residues 33-56; the sequence is LALWATAYLALVLVAVTGNATVIW. Residues 57–69 lie on the Cytoplasmic side of the membrane; it reads IILAHERMRTVTN. A helical transmembrane segment spans residues 70 to 90; the sequence is YFIINLALADLCMAAFNATFN. Over 91–107 the chain is Extracellular; the sequence is FIYASHNIWYFGSTFCY. Residues C106 and C181 are joined by a disulfide bond. Residues 108-129 form a helical membrane-spanning segment; sequence FQNLFPVTAMFVSIYSMTAIAA. The Cytoplasmic segment spans residues 130 to 149; sequence DRYMAIVHPFQPRLSAPSTK. Residues 150–170 traverse the membrane as a helical segment; it reads AVIAVIWLVALALASPQCFYS. The Extracellular segment spans residues 171–196; sequence TITVDQGATKCVVAWPNDNGGKMLLL. A helical membrane pass occupies residues 197–218; the sequence is YHLVVFVLIYFLPLVVMFAAYS. Residues 219 to 251 lie on the Cytoplasmic side of the membrane; that stretch reads VIGLTLWKRAVPRHQAHGANLRHLQAKKKFVKA. The chain crosses the membrane as a helical span at residues 252-272; that stretch reads MVLVVVTFAICWLPYHLYFIL. Topologically, residues 273-290 are extracellular; that stretch reads GTFQEDIYYRKFIQQVYL. The chain crosses the membrane as a helical span at residues 291 to 310; it reads ALFWLAMSSTMYNPIIYCCL. Topologically, residues 311-384 are cytoplasmic; that stretch reads NHRFRSGFRL…GPQDGEPAGP (74 aa). C324 carries S-palmitoyl cysteine lipidation. Residues 365–384 form a disordered region; the sequence is HSEATNGQVGGPQDGEPAGP.

The protein belongs to the G-protein coupled receptor 1 family.

It localises to the cell membrane. This is a receptor for the tachykinin neuropeptide substance K (neurokinin A). It is associated with G proteins that activate a phosphatidylinositol-calcium second messenger system. The rank order of affinity of this receptor to tachykinins is: substance K &gt; neuromedin-K &gt; substance P. This Mus musculus (Mouse) protein is Substance-K receptor (Tacr2).